The sequence spans 398 residues: MESVLSKYEDQITIFTDYLEEYPDTDELVWILGKQHLLKTEKSKLLSDISARLWFTYRRKFSPIGGTGPSSDAGWGCMLRCGQMMLAQALICRHLGRDWSWEKQKEQPKEYQRILQCFLDRKDCCYSIHQMAQMGVGEGKSIGEWFGPNTVAQVLKKLALFDEWNSLAVYVSMDNTVVIEDIKKMCRVLPLSADTAGDRPPDSLTASNQSKGTSAYCSAWKPLLLIVPLRLGINQINPVYVDAFKECFKMPQSLGALGGKPNNAYYFIGFLGDELIFLDPHTTQTFVDTEENGTVNDQTFHCLQSPQRMNILNLDPSVALGFFCKEEKDFDNWCSLVQKEILKENLRMFELVQKHPSHWPPFVPPAKPEVTTTGAEFIDSTEQLEEFDLEEDFEILSV.

The Nucleophile role is filled by Cys77. Active-site residues include Asp279 and His281. The short motif at 393-396 is the LIR element; it reads FEIL.

This sequence belongs to the peptidase C54 family. Interacts with ATG9A; the interaction is direct.

Its subcellular location is the cytoplasm. It carries out the reaction [protein]-C-terminal L-amino acid-glycyl-phosphatidylethanolamide + H2O = [protein]-C-terminal L-amino acid-glycine + a 1,2-diacyl-sn-glycero-3-phosphoethanolamine. With respect to regulation, inhibited by N-ethylmaleimide. Redox-regulated during autophagy since reducing conditions activate ATG4A whereas an oxidizing environment such as the presence of H(2)O(2) inhibits its activity. Functionally, cysteine protease that plays a key role in autophagy by mediating both proteolytic activation and delipidation of ATG8 family proteins. The protease activity is required for proteolytic activation of ATG8 family proteins: cleaves the C-terminal amino acid of ATG8 proteins to reveal a C-terminal glycine. Exposure of the glycine at the C-terminus is essential for ATG8 proteins conjugation to phosphatidylethanolamine (PE) and insertion to membranes, which is necessary for autophagy. Preferred substrate is GABARAPL2 followed by MAP1LC3A and GABARAP. Protease activity is also required to counteract formation of high-molecular weight conjugates of ATG8 proteins (ATG8ylation): acts as a deubiquitinating-like enzyme that removes ATG8 conjugated to other proteins, such as ATG3. In addition to the protease activity, also mediates delipidation of ATG8 family proteins. Catalyzes delipidation of PE-conjugated forms of ATG8 proteins during macroautophagy. Compared to ATG4B, the major protein for proteolytic activation of ATG8 proteins, shows weaker ability to cleave the C-terminal amino acid of ATG8 proteins, while it displays stronger delipidation activity. Involved in phagophore growth during mitophagy independently of its protease activity and of ATG8 proteins: acts by regulating ATG9A trafficking to mitochondria and promoting phagophore-endoplasmic reticulum contacts during the lipid transfer phase of mitophagy. The chain is Cysteine protease ATG4A from Homo sapiens (Human).